The following is a 372-amino-acid chain: Testis-specific serine/threonine-protein kinase 5 (372 aa).

One can recognise a Protein kinase domain in the interval 27 to 302 (LLSSKKIGSG…LQQVAAHCWM (276 aa)). ATP contacts are provided by residues 33 to 41 (IGSGAFSKV) and lysine 72. The active-site Proton acceptor is the aspartate 173. The tract at residues 314-372 (GAPREQDHSWSTVAPDNTEPDRDTRHARSKGSSSSSGRTSPRRPSLAQLCNTWKPAPEQ) is disordered. A compositionally biased stretch (low complexity) spans 343 to 358 (KGSSSSSGRTSPRRPS).

Belongs to the protein kinase superfamily. CAMK Ser/Thr protein kinase family. Mg(2+) serves as cofactor. Autophosphorylated.

It catalyses the reaction L-seryl-[protein] + ATP = O-phospho-L-seryl-[protein] + ADP + H(+). It carries out the reaction L-threonyl-[protein] + ATP = O-phospho-L-threonyl-[protein] + ADP + H(+). Activated by phosphorylation on Thr-207, potentially by autophosphorylation. May be involved in a signaling pathway during male germ cell development or mature sperm function. The protein is Testis-specific serine/threonine-protein kinase 5 of Mus musculus (Mouse).